A 67-amino-acid chain; its full sequence is DNA-directed RNA polymerase subunit omega (67 aa).

It belongs to the RNA polymerase subunit omega family. In terms of assembly, the RNAP catalytic core consists of 2 alpha, 1 beta, 1 beta' and 1 omega subunit. When a sigma factor is associated with the core the holoenzyme is formed, which can initiate transcription.

The catalysed reaction is RNA(n) + a ribonucleoside 5'-triphosphate = RNA(n+1) + diphosphate. Its function is as follows. Promotes RNA polymerase assembly. Latches the N- and C-terminal regions of the beta' subunit thereby facilitating its interaction with the beta and alpha subunits. This is DNA-directed RNA polymerase subunit omega from Paraburkholderia phymatum (strain DSM 17167 / CIP 108236 / LMG 21445 / STM815) (Burkholderia phymatum).